The chain runs to 286 residues: Transcription factor egl-46 (286 aa).

Residues 180–200 (CICRLCKVKYEDVFKLAQHKC) form a C2H2-type 1; atypical zinc finger. 2 consecutive C2H2-type zinc fingers follow at residues 208–230 (YKCPDCDKVFSCPANLASHRRWH) and 248–271 (VSCSTCFNSFPTKKMLKLHSSTCQ).

It belongs to the INSM1 family. Interacts (via C-terminus) with egl-44 (via N-terminus); the interaction is direct; the interaction may regulate transcription. As to expression, expressed in touch cells, HSN cells, ventral cord motor neurons and ciliated ray neurons.

Its subcellular location is the nucleus. In terms of biological role, transcription factor. Represses expression of genes involved in differentiation of touch receptor neurons (TRN), probably acting as a heterodimer with egl-44, perhaps by occupying similar cis-regulatory elements as an unc-86/mec-3 heterodimer. Plays a role in cell fate specification of neurons, including the hook neuron HOB, the gas-sensing neuron BAG and touch receptor neurons. Plays a role in neuron differentiation by repressing the expression of zag-1 in FLP neurons, probably acting as a heterodimer with egl-44; because zag-1 represses expression of egl-46 and egl-44, together these proteins form a bistable, negative-feedback loop that regulates the choice between neuronal fates. Acts downstream of egl-44 to prevent touch cell differentiation in FLP neurons. Involved in male mating behavior, acting in concert with egl-44, via modulation of expression of polycystins lov-1 and pkd-2, homeodomain protein ceh-26, and neuropeptide-like protein nlp-8. Modulates the expression of a subset of terminal differentiation genes involved in O(2)- and CO(2)-sensing, acting in parallel to ets-5 and egl-13. May act upstream of RFX transcription factor daf-19 to regulate gene expression specifically in the HOB neuron. Plays a role in specifying commissural dendrites of the PVD nociceptive neurons, acting in concert with egl-44. In association with egl-44, regulates cell cycle exit in the neuronal Q cell lineage. This Caenorhabditis elegans protein is Transcription factor egl-46.